A 276-amino-acid chain; its full sequence is Flagellin FljJ (276 aa).

Residues 51-80 (RPGAGDMSGLAREDEPGSGDIDRGRGPRAG) form a disordered region. Residues 61–75 (AREDEPGSGDIDRGR) show a composition bias toward basic and acidic residues.

This sequence belongs to the bacterial flagellin family. As to quaternary structure, in C.crescentus, the flagellar filament is composed of multiple flagellins of 29 kDa; 27 kDa and 25 kDa.

The protein localises to the secreted. Its subcellular location is the bacterial flagellum. Flagellin is the subunit protein which polymerizes to form the filaments of bacterial flagella. In Caulobacter vibrioides (strain ATCC 19089 / CIP 103742 / CB 15) (Caulobacter crescentus), this protein is Flagellin FljJ (fljJ).